A 304-amino-acid polypeptide reads, in one-letter code: Ribonuclease BN (304 aa).

Zn(2+) is bound by residues histidine 63, histidine 65, aspartate 67, histidine 68, histidine 140, aspartate 211, and histidine 269. Catalysis depends on aspartate 67, which acts as the Proton acceptor.

This sequence belongs to the RNase Z family. RNase BN subfamily. As to quaternary structure, homodimer. It depends on Zn(2+) as a cofactor.

Zinc phosphodiesterase, which has both exoribonuclease and endoribonuclease activities. This is Ribonuclease BN from Erwinia tasmaniensis (strain DSM 17950 / CFBP 7177 / CIP 109463 / NCPPB 4357 / Et1/99).